The sequence spans 381 residues: Succinyl-diaminopimelate desuccinylase (381 aa).

Residue histidine 69 coordinates Zn(2+). Residue aspartate 71 is part of the active site. Aspartate 103 contributes to the Zn(2+) binding site. Glutamate 137 serves as the catalytic Proton acceptor. Zn(2+) contacts are provided by glutamate 138, glutamate 166, and histidine 355.

This sequence belongs to the peptidase M20A family. DapE subfamily. Homodimer. The cofactor is Zn(2+). Requires Co(2+) as cofactor.

The enzyme catalyses N-succinyl-(2S,6S)-2,6-diaminopimelate + H2O = (2S,6S)-2,6-diaminopimelate + succinate. It functions in the pathway amino-acid biosynthesis; L-lysine biosynthesis via DAP pathway; LL-2,6-diaminopimelate from (S)-tetrahydrodipicolinate (succinylase route): step 3/3. Functionally, catalyzes the hydrolysis of N-succinyl-L,L-diaminopimelic acid (SDAP), forming succinate and LL-2,6-diaminopimelate (DAP), an intermediate involved in the bacterial biosynthesis of lysine and meso-diaminopimelic acid, an essential component of bacterial cell walls. The sequence is that of Succinyl-diaminopimelate desuccinylase from Rickettsia felis (strain ATCC VR-1525 / URRWXCal2) (Rickettsia azadi).